A 294-amino-acid chain; its full sequence is MSSELSETEKRKLIRERRQKKFSNGGASARLNRITGQAENSQLDTESPLDSKSSRETTPTVTKVDSNTEEMDELLENIATSPSNKVEKSQKKKEQATSPQETIDPELEIFKQLAENQQNDVSTPDLFSMLRSMKDNMAKSAATDTNPPLEPVDQQLLDYNNYLINNLKVWSIIFKWCFFLIPYLFALTRSEPISFLPEQFSNPSNFFMIFLSFEIVATSIYFQKLQNIEKSNKINGFQSNNKIVNLVSLIPEGVLPVPDIKGKVIMALQYWDVFSMFLTDICFVLVMMGLFKLI.

The disordered stretch occupies residues 1 to 104 (MSSELSETEK…QATSPQETID (104 aa)). At 1-166 (MSSELSETEK…LDYNNYLINN (166 aa)) the chain is on the cytoplasmic side. Residues 12 to 21 (KLIRERRQKK) show a composition bias toward basic residues. The span at 34–65 (ITGQAENSQLDTESPLDSKSSRETTPTVTKVD) shows a compositional bias: polar residues. Residues 85-95 (KVEKSQKKKEQ) show a composition bias toward basic and acidic residues. Residues 167–187 (LKVWSIIFKWCFFLIPYLFAL) form a helical membrane-spanning segment. Over 188 to 205 (TRSEPISFLPEQFSNPSN) the chain is Lumenal. A helical membrane pass occupies residues 206–225 (FFMIFLSFEIVATSIYFQKL). Residues 226 to 272 (QNIEKSNKINGFQSNNKIVNLVSLIPEGVLPVPDIKGKVIMALQYWD) lie on the Cytoplasmic side of the membrane. A helical transmembrane segment spans residues 273 to 293 (VFSMFLTDICFVLVMMGLFKL). Residue I294 is a topological domain, lumenal.

The protein belongs to the GET2 family. Component of the Golgi to ER traffic (GET) complex, which is composed of GET1, GET2 and GET3. Within the complex, GET1 and GET2 form a heterotetramer which is stabilized by phosphatidylinositol binding and which binds to the GET3 homodimer.

The protein resides in the endoplasmic reticulum membrane. It localises to the golgi apparatus membrane. In terms of biological role, required for the post-translational delivery of tail-anchored (TA) proteins to the endoplasmic reticulum. Together with GET1, acts as a membrane receptor for soluble GET3, which recognizes and selectively binds the transmembrane domain of TA proteins in the cytosol. The GET complex cooperates with the HDEL receptor ERD2 to mediate the ATP-dependent retrieval of resident ER proteins that contain a C-terminal H-D-E-L retention signal from the Golgi to the ER. The sequence is that of Golgi to ER traffic protein 2 from Vanderwaltozyma polyspora (strain ATCC 22028 / DSM 70294 / BCRC 21397 / CBS 2163 / NBRC 10782 / NRRL Y-8283 / UCD 57-17) (Kluyveromyces polysporus).